A 333-amino-acid chain; its full sequence is Tryptophan--tRNA ligase (333 aa).

Residues 11-13 (QPS) and 19-20 (GN) contribute to the ATP site. The 'HIGH' region motif lies at 12–20 (PSGELTIGN). Asp-135 lines the L-tryptophan pocket. ATP contacts are provided by residues 147–149 (GED), Val-186, and 195–199 (KMSKS). A 'KMSKS' region motif is present at residues 195–199 (KMSKS).

Belongs to the class-I aminoacyl-tRNA synthetase family. In terms of assembly, homodimer.

It localises to the cytoplasm. It catalyses the reaction tRNA(Trp) + L-tryptophan + ATP = L-tryptophyl-tRNA(Trp) + AMP + diphosphate + H(+). Functionally, catalyzes the attachment of tryptophan to tRNA(Trp). The sequence is that of Tryptophan--tRNA ligase from Pasteurella multocida (strain Pm70).